A 613-amino-acid polypeptide reads, in one-letter code: Leucine aminopeptidase 2 (613 aa).

A peptide is bound by residues glutamine 134–glutamine 136 and proline 265–glutamate 270. Histidine 294 is a Zn(2+) binding site. The active-site Proton acceptor is glutamate 295. Histidine 298 and glutamate 317 together coordinate Zn(2+). Tyrosine 382 serves as the catalytic Proton donor.

The protein belongs to the peptidase M1 family. The cofactor is Zn(2+).

Its subcellular location is the cytoplasm. It is found in the nucleus. It catalyses the reaction an epoxide + H2O = an ethanediol. Aminopeptidase that preferentially cleaves di- and tripeptides. Also has low epoxide hydrolase activity (in vitro). Can hydrolyze the epoxide leukotriene LTA(4) but it forms preferentially 5,6-dihydroxy-7,9,11,14-eicosatetraenoic acid rather than the cytokine leukotriene B(4) as the product compared to the homologous mammalian enzyme (in vitro). The protein is Leucine aminopeptidase 2 of Pyricularia oryzae (strain 70-15 / ATCC MYA-4617 / FGSC 8958) (Rice blast fungus).